The primary structure comprises 197 residues: A-type ATP synthase subunit E 2 (197 aa).

This sequence belongs to the V-ATPase E subunit family. In terms of assembly, has multiple subunits with at least A(3), B(3), C, D, E, F, H, I and proteolipid K(x).

The protein localises to the cell membrane. Component of the A-type ATP synthase that produces ATP from ADP in the presence of a proton gradient across the membrane. The protein is A-type ATP synthase subunit E 2 of Methanospirillum hungatei JF-1 (strain ATCC 27890 / DSM 864 / NBRC 100397 / JF-1).